Consider the following 442-residue polypeptide: Probable D-serine dehydratase (442 aa).

K115 carries the N6-(pyridoxal phosphate)lysine modification.

It belongs to the serine/threonine dehydratase family. DsdA subfamily. Pyridoxal 5'-phosphate serves as cofactor.

The enzyme catalyses D-serine = pyruvate + NH4(+). In Halalkalibacterium halodurans (strain ATCC BAA-125 / DSM 18197 / FERM 7344 / JCM 9153 / C-125) (Bacillus halodurans), this protein is Probable D-serine dehydratase.